The primary structure comprises 69 residues: Putative antitoxin AF_1481 (69 aa).

This sequence belongs to the UPF0330 family.

Functionally, possibly the antitoxin component of a type II toxin-antitoxin (TA) system. The polypeptide is Putative antitoxin AF_1481 (Archaeoglobus fulgidus (strain ATCC 49558 / DSM 4304 / JCM 9628 / NBRC 100126 / VC-16)).